We begin with the raw amino-acid sequence, 259 residues long: NAP1-related protein 1 (259 aa).

Over residues 1–15 (MAAAEQKGKKPRTDG) the composition is skewed to basic and acidic residues. Residues 1 to 20 (MAAAEQKGKKPRTDGAEAEP) form a disordered region. Residues 21–62 (VDAALLQSIEKLQEIQDEIEKVNEEACDKVLELEQKYNEVRR) adopt a coiled-coil conformation. The tract at residues 228 to 259 (ELLDDDDEVSDDDDEEEDDEDQGEGEEDGEEN) is disordered.

It belongs to the nucleosome assembly protein (NAP) family.

The protein localises to the nucleus. The protein resides in the cytoplasm. Its function is as follows. Acts as a histone H2A/H2B chaperone in nucleosome assembly. The polypeptide is NAP1-related protein 1 (Oryza sativa subsp. indica (Rice)).